An 803-amino-acid polypeptide reads, in one-letter code: Leucine--tRNA ligase (803 aa).

The 'HIGH' region motif lies at 40–51; sequence PYPSGAGLHVGH. A 'KMSKS' region motif is present at residues 575 to 579; it reads KMSKS. Lys578 serves as a coordination point for ATP.

Belongs to the class-I aminoacyl-tRNA synthetase family.

It localises to the cytoplasm. It carries out the reaction tRNA(Leu) + L-leucine + ATP = L-leucyl-tRNA(Leu) + AMP + diphosphate. This Listeria monocytogenes serovar 1/2a (strain ATCC BAA-679 / EGD-e) protein is Leucine--tRNA ligase.